Reading from the N-terminus, the 230-residue chain is Response regulator MprA (230 aa).

The region spanning 4 to 118 (RILVVDDDRA…ELLARMRALL (115 aa)) is the Response regulatory domain. A 4-aspartylphosphate modification is found at Asp48. Positions 129-227 (SPALTFLDLT…VRGVGYVLRE (99 aa)) form a DNA-binding region, ompR/PhoB-type.

Phosphorylated and dephosphorylated by MprB.

Its subcellular location is the cytoplasm. In terms of biological role, member of the two-component regulatory system MprB/MprA which contributes to maintaining a balance among several systems involved in stress resistance and is required for establishment and maintenance of persistent infection in the host. Functions as a transcriptional regulator that recognizes a 19-bp nucleotide motif comprizing two loosely conserved 8-bp direct DNA-binding motif repeats separated by a 3-bp spacer region. The protein is Response regulator MprA (mprA) of Mycobacterium sp. (strain JLS).